The chain runs to 368 residues: uncharacterized protein (368 aa).

The N-terminal stretch at 1 to 19 is a signal peptide; that stretch reads MHVSMIIFVSIFSIKYIMA. N-linked (GlcNAc...) asparagine; by host glycans are attached at residues asparagine 99, asparagine 170, asparagine 266, and asparagine 295.

This is an uncharacterized protein from Ostreid herpesvirus 1 (isolate France) (OsHV-1).